We begin with the raw amino-acid sequence, 148 residues long: Large ribosomal subunit protein uL15 (148 aa).

Residues 1 to 30 are compositionally biased toward basic residues; it reads MTHSKRNTRKLRGHVSHGHGRVGKHRKHPG. The segment at 1–38 is disordered; sequence MTHSKRNTRKLRGHVSHGHGRVGKHRKHPGGRGMAGPE.

This sequence belongs to the universal ribosomal protein uL15 family.

The sequence is that of Large ribosomal subunit protein uL15 (RPL27A) from Euplotes crassus.